Consider the following 369-residue polypeptide: Maltose/maltodextrin import ATP-binding protein MalK (369 aa).

Residues 4-234 form the ABC transporter domain; that stretch reads VQLRNVTKAW…PADRFVAGFI (231 aa). Residue 36 to 43 participates in ATP binding; the sequence is GPSGCGKS.

Belongs to the ABC transporter superfamily. Maltooligosaccharide importer (TC 3.A.1.1.1) family. The complex is composed of two ATP-binding proteins (MalK), two transmembrane proteins (MalG and MalK) and a solute-binding protein (MalE).

It is found in the cell inner membrane. It carries out the reaction D-maltose(out) + ATP + H2O = D-maltose(in) + ADP + phosphate + H(+). In terms of biological role, part of the ABC transporter complex MalEFGK involved in maltose/maltodextrin import. Responsible for energy coupling to the transport system. This chain is Maltose/maltodextrin import ATP-binding protein MalK, found in Salmonella paratyphi A (strain ATCC 9150 / SARB42).